We begin with the raw amino-acid sequence, 682 residues long: Protein SYG1 homolog (682 aa).

Residues 1–219 (MKFGKVIEGQ…HTDLQGFWVD (219 aa)) form the SPX domain. At 1–274 (MKFGKVIEGQ…KEHFSANSMR (274 aa)) the chain is on the cytoplasmic side. The chain crosses the membrane as a helical span at residues 275 to 295 (FGLLFGAGLPLAIEAACYYNA). Residues 296–300 (TEQSS) are Extracellular-facing. Residues 301-321 (YLLQIWGGFFLVIFAFVLFDL) traverse the membrane as a helical segment. Residues 322–348 (DCYVWEKTRVNYMLIFEFNQRKSLNWR) lie on the Cytoplasmic side of the membrane. Residues 349 to 369 (QHLEIVGAVFFIFSLFFFLCM) form a helical membrane-spanning segment. The Extracellular portion of the chain corresponds to 370-377 (RNFFPGFT). Residues 378–398 (IYFPALFLGVVGTFLIAPVIV) traverse the membrane as a helical segment. At 399 to 406 (PYWRMRRY) the chain is on the cytoplasmic side. Residues 407-424 (LIIQLIRVFLSGLSTVHF) form a helical membrane-spanning segment. Over 425–426 (QD) the chain is Extracellular. The helical transmembrane segment at 427–447 (FFFADQMVSLTYACGNISLFF) threads the bilayer. The Cytoplasmic portion of the chain corresponds to 448–525 (CLYKRLWRQP…WRIHPGLKYR (78 aa)). The EXS domain maps to 459-654 (LCNSSHSPLL…VKPHSDVFVS (196 aa)). A helical membrane pass occupies residues 526 to 546 (VLYTIFAGVNSLFSYTWDILM). At 547–571 (DWNLLVRKDGRWQFREHRILKQLWP) the chain is on the extracellular side. The chain crosses the membrane as a helical span at residues 572 to 592 (YIIAMILNFIVRSSFIFYCIF). Over 593–682 (PNHIQHSSGI…QTDVDEAQFS (90 aa)) the chain is Cytoplasmic. The tract at residues 659 to 682 (SDKNYTDDEDSMDDQTDVDEAQFS) is disordered. The span at 665–682 (DDEDSMDDQTDVDEAQFS) shows a compositional bias: acidic residues.

The protein belongs to the SYG1 (TC 2.A.94) family.

The protein localises to the cell membrane. May function in G-protein coupled signal transduction. The protein is Protein SYG1 homolog of Schizosaccharomyces pombe (strain 972 / ATCC 24843) (Fission yeast).